Here is a 286-residue protein sequence, read N- to C-terminus: Bifunctional protein FolD (286 aa).

Residues Gly165–Ser167, Ser190, and Val231 contribute to the NADP(+) site.

Belongs to the tetrahydrofolate dehydrogenase/cyclohydrolase family. As to quaternary structure, homodimer.

The enzyme catalyses (6R)-5,10-methylene-5,6,7,8-tetrahydrofolate + NADP(+) = (6R)-5,10-methenyltetrahydrofolate + NADPH. The catalysed reaction is (6R)-5,10-methenyltetrahydrofolate + H2O = (6R)-10-formyltetrahydrofolate + H(+). It participates in one-carbon metabolism; tetrahydrofolate interconversion. In terms of biological role, catalyzes the oxidation of 5,10-methylenetetrahydrofolate to 5,10-methenyltetrahydrofolate and then the hydrolysis of 5,10-methenyltetrahydrofolate to 10-formyltetrahydrofolate. In Bacillus anthracis (strain A0248), this protein is Bifunctional protein FolD.